We begin with the raw amino-acid sequence, 139 residues long: Translation initiation factor 2 subunit beta (139 aa).

Belongs to the eIF-2-beta/eIF-5 family. In terms of assembly, heterotrimer composed of an alpha, a beta and a gamma chain.

In terms of biological role, eIF-2 functions in the early steps of protein synthesis by forming a ternary complex with GTP and initiator tRNA. This chain is Translation initiation factor 2 subunit beta, found in Saccharolobus islandicus (strain Y.N.15.51 / Yellowstone #2) (Sulfolobus islandicus).